A 299-amino-acid polypeptide reads, in one-letter code: Sulfotransferase 1B1 (299 aa).

48–53 (KSGTTW) is a binding site for 3'-phosphoadenylyl sulfate. 107–109 (KTH) serves as a coordination point for substrate. The Proton acceptor role is filled by His109. Residues Arg131, Ser139, Tyr194, 228-233 (TSFEMM), and 258-260 (RKG) each bind 3'-phosphoadenylyl sulfate.

It belongs to the sulfotransferase 1 family. As to expression, liver specific.

It is found in the cytoplasm. It carries out the reaction a phenol + 3'-phosphoadenylyl sulfate = an aryl sulfate + adenosine 3',5'-bisphosphate + H(+). The enzyme catalyses 3,3',5-triiodo-L-thyronine + 3'-phosphoadenylyl sulfate = 3,3',5-triiodo-L-thyronine sulfate + adenosine 3',5'-bisphosphate + H(+). It catalyses the reaction 3,3',5'-triiodo-L-thyronine + 3'-phosphoadenylyl sulfate = 3,3',5'-triiodo-L-thyronine sulfate + adenosine 3',5'-bisphosphate + H(+). The catalysed reaction is 3,3'-diiodo-L-thyronine + 3'-phosphoadenylyl sulfate = 3,3'-diiodo-L-thyronine sulfate + adenosine 3',5'-bisphosphate + H(+). It carries out the reaction dopamine + 3'-phosphoadenylyl sulfate = dopamine 3-O-sulfate + adenosine 3',5'-bisphosphate + H(+). The enzyme catalyses dopamine + 3'-phosphoadenylyl sulfate = dopamine 4-O-sulfate + adenosine 3',5'-bisphosphate + H(+). It catalyses the reaction 4-ethylphenol + 3'-phosphoadenylyl sulfate = 4-ethylphenyl sulfate + adenosine 3',5'-bisphosphate + H(+). In terms of biological role, sulfotransferase that utilizes 3'-phospho-5'-adenylyl sulfate (PAPS) as sulfonate donor to catalyze the sulfate conjugation of dopamine, small phenols such as 1-naphthol and p-nitrophenol and thyroid hormones, including 3,3'-diiodothyronine, triidothyronine (T3) and reverse triiodothyronine (rT3). May play a role in gut microbiota-host metabolic interaction. O-sulfonates 4-ethylphenol (4-EP), a dietary tyrosine-derived metabolite produced by gut bacteria. The product 4-EPS crosses the blood-brain barrier and may negatively regulate oligodendrocyte maturation and myelination, affecting the functional connectivity of different brain regions associated with the limbic system. This chain is Sulfotransferase 1B1, found in Mus musculus (Mouse).